A 564-amino-acid polypeptide reads, in one-letter code: Proline--tRNA ligase 1 (564 aa).

The protein belongs to the class-II aminoacyl-tRNA synthetase family. ProS type 1 subfamily. Homodimer.

The protein resides in the cytoplasm. The catalysed reaction is tRNA(Pro) + L-proline + ATP = L-prolyl-tRNA(Pro) + AMP + diphosphate. Its function is as follows. Catalyzes the attachment of proline to tRNA(Pro) in a two-step reaction: proline is first activated by ATP to form Pro-AMP and then transferred to the acceptor end of tRNA(Pro). As ProRS can inadvertently accommodate and process non-cognate amino acids such as alanine and cysteine, to avoid such errors it has two additional distinct editing activities against alanine. One activity is designated as 'pretransfer' editing and involves the tRNA(Pro)-independent hydrolysis of activated Ala-AMP. The other activity is designated 'posttransfer' editing and involves deacylation of mischarged Ala-tRNA(Pro). The misacylated Cys-tRNA(Pro) is not edited by ProRS. This chain is Proline--tRNA ligase 1, found in Streptomyces avermitilis (strain ATCC 31267 / DSM 46492 / JCM 5070 / NBRC 14893 / NCIMB 12804 / NRRL 8165 / MA-4680).